The sequence spans 762 residues: Phospholipase D alpha 4 (762 aa).

Positions 1–116 constitute a C2 domain; that stretch reads MELEEQKKYF…VINGFFPLIA (116 aa). Asp-172 lines the Ca(2+) pocket. A PLD phosphodiesterase 1 domain is found at 301–339; sequence TAFAHHQKTITLDTRVTNSSTKEREIMSFLGGFDLCDGR. Catalysis depends on residues His-306, Lys-308, and Asp-313. His-306 is a binding site for a 1,2-diacyl-sn-glycero-3-phosphate. Ca(2+) contacts are provided by His-345 and His-377. Residues Gln-477 and His-615 each coordinate a 1,2-diacyl-sn-glycero-3-phosphate. The region spanning 610–637 is the PLD phosphodiesterase 2 domain; sequence FMVYVHSKLMIVDDTYILIGSANINQRS. Residues His-615, Lys-617, and Asp-622 contribute to the active site. Glu-671 provides a ligand contact to Ca(2+).

The protein belongs to the phospholipase D family. C2-PLD subfamily. Requires Ca(2+) as cofactor. In terms of tissue distribution, expressed in roots, leaves, stems, siliques,flowers and inflorescences.

Its subcellular location is the cell membrane. It catalyses the reaction a 1,2-diacyl-sn-glycero-3-phosphocholine + H2O = a 1,2-diacyl-sn-glycero-3-phosphate + choline + H(+). In terms of biological role, hydrolyzes glycerol-phospholipids at the terminal phosphodiesteric bond to generate phosphatidic acids (PA). Promotes growth and plays a role in nitrogen signaling. The sequence is that of Phospholipase D alpha 4 from Arabidopsis thaliana (Mouse-ear cress).